We begin with the raw amino-acid sequence, 336 residues long: Glycerol-3-phosphate dehydrogenase [NAD(P)+] (336 aa).

NADPH-binding residues include Ser-11, Trp-12, and Lys-106. Sn-glycerol 3-phosphate is bound by residues Lys-106, Gly-134, and Ser-136. Ala-138 contributes to the NADPH binding site. Residues Lys-189, Asp-242, Ser-252, Arg-253, and Asn-254 each coordinate sn-glycerol 3-phosphate. The active-site Proton acceptor is Lys-189. Arg-253 is an NADPH binding site. The NADPH site is built by Val-277 and Glu-279.

It belongs to the NAD-dependent glycerol-3-phosphate dehydrogenase family.

The protein localises to the cytoplasm. The catalysed reaction is sn-glycerol 3-phosphate + NAD(+) = dihydroxyacetone phosphate + NADH + H(+). It carries out the reaction sn-glycerol 3-phosphate + NADP(+) = dihydroxyacetone phosphate + NADPH + H(+). The protein operates within membrane lipid metabolism; glycerophospholipid metabolism. Catalyzes the reduction of the glycolytic intermediate dihydroxyacetone phosphate (DHAP) to sn-glycerol 3-phosphate (G3P), the key precursor for phospholipid synthesis. The sequence is that of Glycerol-3-phosphate dehydrogenase [NAD(P)+] from Agathobacter rectalis (strain ATCC 33656 / DSM 3377 / JCM 17463 / KCTC 5835 / VPI 0990) (Eubacterium rectale).